A 65-amino-acid polypeptide reads, in one-letter code: Sec-independent protein translocase protein TatA (65 aa).

Residues 9-29 (ILIIVLLVVVVFGVGKLPQVG) form a helical membrane-spanning segment. The segment at 40 to 65 (RKASTGEDAKEEVETKEETKPAEKSE) is disordered. The segment covering 43–65 (STGEDAKEEVETKEETKPAEKSE) has biased composition (basic and acidic residues).

The protein belongs to the TatA/E family. Forms a complex with TatC.

The protein resides in the cell membrane. In terms of biological role, part of the twin-arginine translocation (Tat) system that transports large folded proteins containing a characteristic twin-arginine motif in their signal peptide across membranes. TatA could form the protein-conducting channel of the Tat system. This chain is Sec-independent protein translocase protein TatA, found in Dehalococcoides mccartyi (strain ATCC BAA-2100 / JCM 16839 / KCTC 5957 / BAV1).